The following is a 497-amino-acid chain: Di-/tripeptide transporter (497 aa).

Topologically, residues 1–36 (MQNLNKTEKTFFGQPRGLLTLFQTEFWERFSYYGMR) are cytoplasmic. The chain crosses the membrane as a helical span at residues 37–55 (AILVYYLYALTTADNAGLG). Topologically, residues 56-64 (LPKAQAMAI) are extracellular. A helical membrane pass occupies residues 65 to 83 (VSIYGALVYLSTIVGGWVA). Residues 84 to 92 (DRLLGASRT) lie on the Cytoplasmic side of the membrane. The helical transmembrane segment at 93–111 (IFLGGILITLGHIALATPF) threads the bilayer. Topologically, residues 112 to 115 (GLSS) are extracellular. A helical transmembrane segment spans residues 116–134 (LFVALFLIILGTGMLKPNI). Residues 135–154 (SNMVGHLYSKDDSRRDTGFN) lie on the Cytoplasmic side of the membrane. The helical transmembrane segment at 155–173 (IFVVGINMGSLIAPLIVGT) threads the bilayer. Topologically, residues 174–181 (VGQGVNYH) are extracellular. The helical transmembrane segment at 182–200 (LGFSLAAIGMIFALFAYWY) threads the bilayer. Residues 201-224 (GRLRHFPEIGREPSNPMDSKARRN) are Cytoplasmic-facing. A helical transmembrane segment spans residues 225 to 243 (FLITLTIVVIVAIIGFFLL). The Extracellular segment spans residues 244-254 (YQASPANFINN). A helical transmembrane segment spans residues 255-273 (FINVLSIIGIVVPIIYFVM). Topologically, residues 274-293 (MFTSKKVESDERRKLTAYIP) are cytoplasmic. A helical membrane pass occupies residues 294 to 312 (LFLSAIVFWAIEEQSSTII). The Extracellular segment spans residues 313 to 335 (AVWGESRSNLDPTWFGITFHIDP). The helical transmembrane segment at 336–354 (SWYQLLNPLFIVLLSPIFV) threads the bilayer. At 355 to 372 (RLWNKLGERQPSTIVKFG) the chain is on the cytoplasmic side. A helical transmembrane segment spans residues 373 to 391 (LGLMLTGISYLIMTLPGLL). Over 392–425 (NGTSGRASALWLVLMFAVQMAGELLVSPVGLSVS) the chain is Extracellular. Residues 426 to 444 (TKLAPVAFQSQMMAMWFLA) form a helical membrane-spanning segment. Residues 445-497 (DSTSQAINAQITPLFKAATEVHFFAITGIIGIIVGIILLIVKKPILKLMGDVR) are Cytoplasmic-facing.

Belongs to the major facilitator superfamily. Proton-dependent oligopeptide transporter (POT/PTR) (TC 2.A.17) family.

The protein resides in the cell membrane. Proton-dependent uptake of di- or tri-peptides. This Lactococcus lactis subsp. lactis (strain IL1403) (Streptococcus lactis) protein is Di-/tripeptide transporter (dtpT).